Consider the following 168-residue polypeptide: G/U mismatch-specific DNA glycosylase (168 aa).

It belongs to the uracil-DNA glycosylase (UDG) superfamily. TDG/mug family. Binds DNA as a monomer.

It localises to the cytoplasm. The enzyme catalyses Specifically hydrolyzes mismatched double-stranded DNA and polynucleotides, releasing free uracil.. In terms of biological role, excises ethenocytosine and uracil, which can arise by alkylation or deamination of cytosine, respectively, from the corresponding mispairs with guanine in ds-DNA. It is capable of hydrolyzing the carbon-nitrogen bond between the sugar-phosphate backbone of the DNA and the mispaired base. The complementary strand guanine functions in substrate recognition. Required for DNA damage lesion repair in stationary-phase cells. In Escherichia coli O9:H4 (strain HS), this protein is G/U mismatch-specific DNA glycosylase.